Consider the following 637-residue polypeptide: Tumor protein p73 (637 aa).

The interval 1–46 (MAQSTTTSPDGGTTFEHLWSSLEPDSTYFDLPQSSRGNNEVVGGTD) is transactivation. Thr-27 bears the Phosphothreonine mark. Phosphotyrosine; by SRC and HCK is present on Tyr-28. The interval 78-104 (RAASASPYTPEHAASVPTHSPYAQPSS) is disordered. Polar residues predominate over residues 94–104 (PTHSPYAQPSS). Tyr-99 bears the Phosphotyrosine mark. Residues 131–310 (FQQSSTAKSA…DRKADEDHYR (180 aa)) form a DNA-binding region. The Zn(2+) site is built by Cys-194, His-197, Cys-258, and Cys-262. Residues 301–311 (DRKADEDHYRE) show a composition bias toward basic and acidic residues. The tract at residues 301-351 (DRKADEDHYREQQALNESSAKNGAASKRAFKQSPPAVPALGPGVKKRRHGD) is disordered. Positions 345-380 (KKRRHGDEDTYYLQVRGRENFEILMKLKESLELMEL) are interaction with HIPK2. Residues 345-386 (KKRRHGDEDTYYLQVRGRENFEILMKLKESLELMELVPQPLV) form an oligomerization region. Residues 483–487 (PPPPY) carry the PPxY motif motif. Residues 485-551 (PPYHADPSLV…WRGLQDLKQG (67 aa)) form the SAM domain. Residue Lys-628 forms a Glycyl lysine isopeptide (Lys-Gly) (interchain with G-Cter in SUMO); in isoform Alpha linkage. Lys-628 is covalently cross-linked (Glycyl lysine isopeptide (Lys-Gly) (interchain with G-Cter in SUMO2)).

It belongs to the p53 family. Found in a complex with p53/TP53 and CABLES1. The C-terminal oligomerization domain binds to the ABL1 tyrosine kinase SH3 domain. Interacts with HECW2. Isoforms Alpha and Beta interact with HIPK2. Isoform Alpha interacts with RANBP9. Interacts with WWOX. Isoform Beta interacts homotypically and with p53, whereas isoform Alpha does not. Interacts (via SAM domain) with FBXO45 (via B30.2/SPRY domain). Interacts with YAP1 (phosphorylated form). Interacts with HCK (via SH3 domain); this inhibits TP73 activity and degradation. The cofactor is Zn(2+). Post-translationally, isoform Alpha (but not isoform Beta) is sumoylated on Lys-628, which potentiates proteasomal degradation but does not affect transcriptional activity. Polyubiquitinated by RCHY1/PIRH2; leading to its degradation by the proteasome.

Its subcellular location is the nucleus. It localises to the cytoplasm. Functionally, participates in the apoptotic response to DNA damage. May be a tumor suppressor protein. Is an activator of FOXJ1 expression, essential for the positive regulation of lung ciliated cell differentiation. The protein is Tumor protein p73 (TP73) of Chlorocebus aethiops (Green monkey).